The sequence spans 101 residues: Ubiquitin-related modifier 1 homolog (101 aa).

Position 101 is a 1-thioglycine (glycine 101). A Glycyl lysine isopeptide (Gly-Lys) (interchain with K-? in acceptor proteins) cross-link involves residue glycine 101.

Belongs to the URM1 family. In terms of assembly, interacts with cer. Post-translationally, C-terminal thiocarboxylation occurs in 2 steps, it is first acyl-adenylated (-COAMP) via the hesA/moeB/thiF part of the MOCS3 homolog, then thiocarboxylated (-COSH) via the rhodanese domain of the MOCS3 homolog.

Its subcellular location is the cytoplasm. The protein operates within tRNA modification; 5-methoxycarbonylmethyl-2-thiouridine-tRNA biosynthesis. Functionally, acts as a sulfur carrier required for 2-thiolation of mcm(5)S(2)U at tRNA wobble positions of cytosolic tRNA(Lys), tRNA(Glu) and tRNA(Gln). Serves as sulfur donor in tRNA 2-thiolation reaction by being thiocarboxylated (-COSH) at its C-terminus by MOCS3. The sulfur is then transferred to tRNA to form 2-thiolation of mcm(5)S(2)U. Also acts as a ubiquitin-like protein (UBL) that is covalently conjugated via an isopeptide bond to lysine residues of target proteins such as Prx2/Jafrac1, Ciao1, Eip71CD and GILT1. The thiocarboxylated form serves as substrate for conjugation and oxidative stress specifically induces the formation of UBL-protein conjugates. This is Ubiquitin-related modifier 1 homolog from Drosophila erecta (Fruit fly).